We begin with the raw amino-acid sequence, 161 residues long: MPSFDVVSELDKHELTNAVENAVKELDRRYDLKGKGSFEYKEKDLTVHLTAEADFQLEAMIEILKLALVKRKIDVQCLEVKDSFASGKLMKQDAVLKEGIDKELAKKIVGHIKEAKLKVQAAIQGEQVRVTGKKRDDLQEAIAALRAKEFGMPLQFNNFRD.

The protein belongs to the YajQ family.

Nucleotide-binding protein. The polypeptide is Nucleotide-binding protein Pfl01_4421 (Pseudomonas fluorescens (strain Pf0-1)).